The sequence spans 338 residues: Phenylalanine--tRNA ligase alpha subunit (338 aa).

Glu-253 is a Mg(2+) binding site.

Belongs to the class-II aminoacyl-tRNA synthetase family. Phe-tRNA synthetase alpha subunit type 1 subfamily. In terms of assembly, tetramer of two alpha and two beta subunits. Mg(2+) is required as a cofactor.

Its subcellular location is the cytoplasm. It catalyses the reaction tRNA(Phe) + L-phenylalanine + ATP = L-phenylalanyl-tRNA(Phe) + AMP + diphosphate + H(+). This chain is Phenylalanine--tRNA ligase alpha subunit, found in Citrifermentans bemidjiense (strain ATCC BAA-1014 / DSM 16622 / JCM 12645 / Bem) (Geobacter bemidjiensis).